Consider the following 164-residue polypeptide: Dehydrin Rab16C (164 aa).

Residues 42 to 51 (MGGHHAGAGG) are compositionally biased toward gly residues. The segment at 42–164 (MGGHHAGAGG…KIKEKLPGQH (123 aa)) is disordered. The span at 105 to 115 (GNNHQQQQMMG) shows a compositional bias: low complexity. Residues 128-138 (GMTGAGTGTGV) are compositionally biased toward gly residues. The segment covering 147–164 (GEKKGFMDKIKEKLPGQH) has biased composition (basic and acidic residues).

This sequence belongs to the plant dehydrin family.

The protein is Dehydrin Rab16C (RAB16C) of Oryza sativa subsp. indica (Rice).